A 227-amino-acid chain; its full sequence is Cytochrome c oxidase subunit 2 (227 aa).

The Mitochondrial intermembrane portion of the chain corresponds to 1 to 14 (MAHPAQLGFQDAAS). Residues 15 to 45 (PIMEELMYFHDHTLMIVFLISSLVLYIISLM) traverse the membrane as a helical segment. The Mitochondrial matrix segment spans residues 46–59 (LTTELTHTSTMDAQ). The helical transmembrane segment at 60–87 (EVETVWTILPAVILILIALPSLRILYMM) threads the bilayer. Topologically, residues 88 to 227 (DEITTPSLTL…HFEEWLLSTL (140 aa)) are mitochondrial intermembrane. The Cu cation site is built by His161, Cys196, Glu198, Cys200, His204, and Met207. Glu198 contributes to the Mg(2+) binding site.

Belongs to the cytochrome c oxidase subunit 2 family. Component of the cytochrome c oxidase (complex IV, CIV), a multisubunit enzyme composed of 14 subunits. The complex is composed of a catalytic core of 3 subunits MT-CO1, MT-CO2 and MT-CO3, encoded in the mitochondrial DNA, and 11 supernumerary subunits COX4I, COX5A, COX5B, COX6A, COX6B, COX6C, COX7A, COX7B, COX7C, COX8 and NDUFA4, which are encoded in the nuclear genome. The complex exists as a monomer or a dimer and forms supercomplexes (SCs) in the inner mitochondrial membrane with NADH-ubiquinone oxidoreductase (complex I, CI) and ubiquinol-cytochrome c oxidoreductase (cytochrome b-c1 complex, complex III, CIII), resulting in different assemblies (supercomplex SCI(1)III(2)IV(1) and megacomplex MCI(2)III(2)IV(2)). Found in a complex with TMEM177, COA6, COX18, COX20, SCO1 and SCO2. Interacts with TMEM177 in a COX20-dependent manner. Interacts with COX20. Interacts with COX16. Requires Cu cation as cofactor.

It is found in the mitochondrion inner membrane. The catalysed reaction is 4 Fe(II)-[cytochrome c] + O2 + 8 H(+)(in) = 4 Fe(III)-[cytochrome c] + 2 H2O + 4 H(+)(out). Its function is as follows. Component of the cytochrome c oxidase, the last enzyme in the mitochondrial electron transport chain which drives oxidative phosphorylation. The respiratory chain contains 3 multisubunit complexes succinate dehydrogenase (complex II, CII), ubiquinol-cytochrome c oxidoreductase (cytochrome b-c1 complex, complex III, CIII) and cytochrome c oxidase (complex IV, CIV), that cooperate to transfer electrons derived from NADH and succinate to molecular oxygen, creating an electrochemical gradient over the inner membrane that drives transmembrane transport and the ATP synthase. Cytochrome c oxidase is the component of the respiratory chain that catalyzes the reduction of oxygen to water. Electrons originating from reduced cytochrome c in the intermembrane space (IMS) are transferred via the dinuclear copper A center (CU(A)) of subunit 2 and heme A of subunit 1 to the active site in subunit 1, a binuclear center (BNC) formed by heme A3 and copper B (CU(B)). The BNC reduces molecular oxygen to 2 water molecules using 4 electrons from cytochrome c in the IMS and 4 protons from the mitochondrial matrix. The chain is Cytochrome c oxidase subunit 2 (MT-CO2) from Microcebus tavaratra (Northern rufous mouse lemur).